Consider the following 513-residue polypeptide: Glycine/sarcosine/betaine reductase complex component C subunit beta (513 aa).

As to quaternary structure, heterooctamer of four alpha and four beta subunits. Component of the glycine, sarcosine and betaine reductase complexes, together with proteins A and B.

It carries out the reaction acetyl phosphate + [thioredoxin]-disulfide + NH4(+) + H2O = [thioredoxin]-dithiol + glycine + phosphate + H(+). The enzyme catalyses acetyl phosphate + methylamine + [thioredoxin]-disulfide + H2O = sarcosine + [thioredoxin]-dithiol + phosphate + H(+). The catalysed reaction is acetyl phosphate + trimethylamine + [thioredoxin]-disulfide + H2O = glycine betaine + [thioredoxin]-dithiol + phosphate + H(+). In terms of biological role, in the first step of glycine, betaine and sarcosine reductases, the substrate is bound to component PB via a Schiff base intermediate. Then the PB-activated substrate is nucleophilically attacked by the selenol anion of component PA to transform it to a carboxymethylated selenoether and the respective amine. By action of component PC, acetyl phosphate is formed, leaving component PA in its oxidized state. Finally component PA becomes reduced by the thioredoxin system to start a new catalytic cycle of reductive deamination. This is Glycine/sarcosine/betaine reductase complex component C subunit beta (grdC) from Peptoclostridium acidaminophilum (Eubacterium acidaminophilum).